The following is a 337-amino-acid chain: 3-isopropylmalate dehydrogenase (337 aa).

The substrate site is built by Arg-88, Arg-98, Arg-122, and Asp-212. Mg(2+) is bound by residues Asp-212, Asp-236, and Asp-240. 272–284 (GSAPDIAGKGIAD) is an NAD(+) binding site.

The protein belongs to the isocitrate and isopropylmalate dehydrogenases family. LeuB type 2 subfamily. In terms of assembly, homodimer. It depends on Mg(2+) as a cofactor. The cofactor is Mn(2+).

It is found in the cytoplasm. The enzyme catalyses (2R,3S)-3-isopropylmalate + NAD(+) = 4-methyl-2-oxopentanoate + CO2 + NADH. It functions in the pathway amino-acid biosynthesis; L-leucine biosynthesis; L-leucine from 3-methyl-2-oxobutanoate: step 3/4. Catalyzes the oxidation of 3-carboxy-2-hydroxy-4-methylpentanoate (3-isopropylmalate) to 3-carboxy-4-methyl-2-oxopentanoate. The product decarboxylates to 4-methyl-2 oxopentanoate. This chain is 3-isopropylmalate dehydrogenase, found in Rhodococcus erythropolis (strain PR4 / NBRC 100887).